Consider the following 659-residue polypeptide: tRNA 5-methylaminomethyl-2-thiouridine biosynthesis bifunctional protein MnmC (659 aa).

The tract at residues 1–236 (MKPVMPHAQL…KWEILRGEFL (236 aa)) is tRNA (mnm(5)s(2)U34)-methyltransferase. Residues 267–659 (IGAGLAGCAT…FALRRLIRGK (393 aa)) are FAD-dependent cmnm(5)s(2)U34 oxidoreductase.

It in the N-terminal section; belongs to the methyltransferase superfamily. tRNA (mnm(5)s(2)U34)-methyltransferase family. The protein in the C-terminal section; belongs to the DAO family. It depends on FAD as a cofactor.

It localises to the cytoplasm. It catalyses the reaction 5-aminomethyl-2-thiouridine(34) in tRNA + S-adenosyl-L-methionine = 5-methylaminomethyl-2-thiouridine(34) in tRNA + S-adenosyl-L-homocysteine + H(+). Functionally, catalyzes the last two steps in the biosynthesis of 5-methylaminomethyl-2-thiouridine (mnm(5)s(2)U) at the wobble position (U34) in tRNA. Catalyzes the FAD-dependent demodification of cmnm(5)s(2)U34 to nm(5)s(2)U34, followed by the transfer of a methyl group from S-adenosyl-L-methionine to nm(5)s(2)U34, to form mnm(5)s(2)U34. The chain is tRNA 5-methylaminomethyl-2-thiouridine biosynthesis bifunctional protein MnmC from Pseudomonas fluorescens (strain Pf0-1).